Reading from the N-terminus, the 383-residue chain is Succinyl-diaminopimelate desuccinylase (383 aa).

His-73 contributes to the Zn(2+) binding site. Residue Asp-75 is part of the active site. Asp-107 is a binding site for Zn(2+). The Proton acceptor role is filled by Glu-141. Zn(2+)-binding residues include Glu-142, Glu-170, and His-356.

It belongs to the peptidase M20A family. DapE subfamily. Homodimer. The cofactor is Zn(2+). Co(2+) serves as cofactor.

It carries out the reaction N-succinyl-(2S,6S)-2,6-diaminopimelate + H2O = (2S,6S)-2,6-diaminopimelate + succinate. It functions in the pathway amino-acid biosynthesis; L-lysine biosynthesis via DAP pathway; LL-2,6-diaminopimelate from (S)-tetrahydrodipicolinate (succinylase route): step 3/3. In terms of biological role, catalyzes the hydrolysis of N-succinyl-L,L-diaminopimelic acid (SDAP), forming succinate and LL-2,6-diaminopimelate (DAP), an intermediate involved in the bacterial biosynthesis of lysine and meso-diaminopimelic acid, an essential component of bacterial cell walls. The chain is Succinyl-diaminopimelate desuccinylase from Pseudomonas fluorescens (strain ATCC BAA-477 / NRRL B-23932 / Pf-5).